Reading from the N-terminus, the 365-residue chain is Peptide chain release factor 2 (365 aa).

Glutamine 252 carries the post-translational modification N5-methylglutamine.

This sequence belongs to the prokaryotic/mitochondrial release factor family. Post-translationally, methylated by PrmC. Methylation increases the termination efficiency of RF2.

It is found in the cytoplasm. Peptide chain release factor 2 directs the termination of translation in response to the peptide chain termination codons UGA and UAA. This chain is Peptide chain release factor 2, found in Aeromonas salmonicida (strain A449).